We begin with the raw amino-acid sequence, 283 residues long: Bifunctional protein FolD (283 aa).

NADP(+)-binding positions include 164 to 166 (GRS), S189, and I230.

It belongs to the tetrahydrofolate dehydrogenase/cyclohydrolase family. Homodimer.

The enzyme catalyses (6R)-5,10-methylene-5,6,7,8-tetrahydrofolate + NADP(+) = (6R)-5,10-methenyltetrahydrofolate + NADPH. It carries out the reaction (6R)-5,10-methenyltetrahydrofolate + H2O = (6R)-10-formyltetrahydrofolate + H(+). The protein operates within one-carbon metabolism; tetrahydrofolate interconversion. Its function is as follows. Catalyzes the oxidation of 5,10-methylenetetrahydrofolate to 5,10-methenyltetrahydrofolate and then the hydrolysis of 5,10-methenyltetrahydrofolate to 10-formyltetrahydrofolate. The chain is Bifunctional protein FolD from Pelobacter propionicus (strain DSM 2379 / NBRC 103807 / OttBd1).